A 241-amino-acid chain; its full sequence is Uridylate kinase (241 aa).

ATP is bound at residue 13–16 (KVSG). Position 55 (Gly-55) interacts with UMP. Positions 56 and 60 each coordinate ATP. Residues Asp-75 and 136–143 (TGNPFFTT) contribute to the UMP site. 4 residues coordinate ATP: Thr-163, Gln-164, Tyr-169, and Asp-172.

This sequence belongs to the UMP kinase family. Homohexamer.

It localises to the cytoplasm. The enzyme catalyses UMP + ATP = UDP + ADP. It participates in pyrimidine metabolism; CTP biosynthesis via de novo pathway; UDP from UMP (UMPK route): step 1/1. Inhibited by UTP. Functionally, catalyzes the reversible phosphorylation of UMP to UDP. This is Uridylate kinase from Parvibaculum lavamentivorans (strain DS-1 / DSM 13023 / NCIMB 13966).